The following is a 157-amino-acid chain: Protein-export protein SecB (157 aa).

It belongs to the SecB family. In terms of assembly, homotetramer, a dimer of dimers. One homotetramer interacts with 1 SecA dimer.

The protein resides in the cytoplasm. Functionally, one of the proteins required for the normal export of preproteins out of the cell cytoplasm. It is a molecular chaperone that binds to a subset of precursor proteins, maintaining them in a translocation-competent state. It also specifically binds to its receptor SecA. This chain is Protein-export protein SecB, found in Shewanella oneidensis (strain ATCC 700550 / JCM 31522 / CIP 106686 / LMG 19005 / NCIMB 14063 / MR-1).